The primary structure comprises 298 residues: Zinc import ATP-binding protein ZnuC (298 aa).

One can recognise an ABC transporter domain in the interval 17–232; sequence IELRNAGVYR…PEYVRLFGSR (216 aa). 49–56 contributes to the ATP binding site; it reads GPNGAGKS. The segment at 273-298 is disordered; sequence RGHCHVEDGHHHDHEHHHHEGGQPRA. Basic and acidic residues predominate over residues 276-298; it reads CHVEDGHHHDHEHHHHEGGQPRA.

It belongs to the ABC transporter superfamily. Zinc importer (TC 3.A.1.15.5) family. As to quaternary structure, the complex is composed of two ATP-binding proteins (ZnuC), two transmembrane proteins (ZnuB) and a solute-binding protein (ZnuA).

Its subcellular location is the cell inner membrane. The enzyme catalyses Zn(2+)(out) + ATP(in) + H2O(in) = Zn(2+)(in) + ADP(in) + phosphate(in) + H(+)(in). Its function is as follows. Part of the ABC transporter complex ZnuABC involved in zinc import. Responsible for energy coupling to the transport system. This Brucella abortus (strain 2308) protein is Zinc import ATP-binding protein ZnuC.